The chain runs to 505 residues: Kelch-like protein 42 (505 aa).

In terms of domain architecture, BTB spans 5–78; sequence EMVQIRLEDR…INAGGAREGW (74 aa). Phosphoserine is present on S43. Kelch repeat units follow at residues 176-234, 235-282, 284-325, 327-372, 374-429, and 431-480; these read PGDV…PLAN, NLPP…NEWL, VASM…DAWN, VAPL…DMWT, FETC…RQWL, and LKEN…DSWE.

Component of the BCR(KLHL42) E3 ubiquitin ligase complex, at least composed of CUL3 and KLHL42. Interacts (via the BTB domain) with CUL3. Interacts (via the kelch domains) with KATNA1.

It is found in the cytoplasm. It localises to the cytoskeleton. The protein localises to the spindle. Its pathway is protein modification; protein ubiquitination. Substrate-specific adapter of a BCR (BTB-CUL3-RBX1) E3 ubiquitin-protein ligase complex required for mitotic progression and cytokinesis. The BCR(KLHL42) E3 ubiquitin ligase complex mediates the ubiquitination and subsequent degradation of KATNA1. Involved in microtubule dynamics throughout mitosis. In Homo sapiens (Human), this protein is Kelch-like protein 42 (KLHL42).